We begin with the raw amino-acid sequence, 337 residues long: Undecaprenyl-phosphate 4-deoxy-4-formamido-L-arabinose transferase (337 aa).

2 helical membrane passes run leucine 235–valine 255 and phenylalanine 270–leucine 290.

It belongs to the glycosyltransferase 2 family.

The protein localises to the cell inner membrane. It catalyses the reaction UDP-4-deoxy-4-formamido-beta-L-arabinose + di-trans,octa-cis-undecaprenyl phosphate = 4-deoxy-4-formamido-alpha-L-arabinopyranosyl di-trans,octa-cis-undecaprenyl phosphate + UDP. Its pathway is glycolipid biosynthesis; 4-amino-4-deoxy-alpha-L-arabinose undecaprenyl phosphate biosynthesis; 4-amino-4-deoxy-alpha-L-arabinose undecaprenyl phosphate from UDP-4-deoxy-4-formamido-beta-L-arabinose and undecaprenyl phosphate: step 1/2. It participates in bacterial outer membrane biogenesis; lipopolysaccharide biosynthesis. Its function is as follows. Catalyzes the transfer of 4-deoxy-4-formamido-L-arabinose from UDP to undecaprenyl phosphate. The modified arabinose is attached to lipid A and is required for resistance to polymyxin and cationic antimicrobial peptides. This is Undecaprenyl-phosphate 4-deoxy-4-formamido-L-arabinose transferase from Pseudomonas syringae pv. syringae (strain B728a).